The sequence spans 595 residues: NADH-quinone oxidoreductase subunit C/D (595 aa).

The NADH dehydrogenase I subunit C stretch occupies residues 1-185; sequence MNKNICLSAS…NPFVLTKEKE (185 aa). The tract at residues 209-595 is NADH dehydrogenase I subunit D; it reads DFMFLNFGPN…IDFVMSDVDR (387 aa).

The protein in the N-terminal section; belongs to the complex I 30 kDa subunit family. It in the C-terminal section; belongs to the complex I 49 kDa subunit family. NDH-1 is composed of 13 different subunits. Subunits NuoB, CD, E, F, and G constitute the peripheral sector of the complex.

It localises to the cell inner membrane. It carries out the reaction a quinone + NADH + 5 H(+)(in) = a quinol + NAD(+) + 4 H(+)(out). Functionally, NDH-1 shuttles electrons from NADH, via FMN and iron-sulfur (Fe-S) centers, to quinones in the respiratory chain. The immediate electron acceptor for the enzyme in this species is believed to be ubiquinone. Couples the redox reaction to proton translocation (for every two electrons transferred, four hydrogen ions are translocated across the cytoplasmic membrane), and thus conserves the redox energy in a proton gradient. In Baumannia cicadellinicola subsp. Homalodisca coagulata, this protein is NADH-quinone oxidoreductase subunit C/D.